The following is a 429-amino-acid chain: Gamma-glutamyl phosphate reductase (429 aa).

It belongs to the gamma-glutamyl phosphate reductase family.

The protein localises to the cytoplasm. The catalysed reaction is L-glutamate 5-semialdehyde + phosphate + NADP(+) = L-glutamyl 5-phosphate + NADPH + H(+). Its pathway is amino-acid biosynthesis; L-proline biosynthesis; L-glutamate 5-semialdehyde from L-glutamate: step 2/2. Catalyzes the NADPH-dependent reduction of L-glutamate 5-phosphate into L-glutamate 5-semialdehyde and phosphate. The product spontaneously undergoes cyclization to form 1-pyrroline-5-carboxylate. This Methylibium petroleiphilum (strain ATCC BAA-1232 / LMG 22953 / PM1) protein is Gamma-glutamyl phosphate reductase.